We begin with the raw amino-acid sequence, 235 residues long: Large ribosomal subunit protein uL3 (235 aa).

The disordered stretch occupies residues 138–157 (SVSHRSHGSTGGRQDPGKTF). N5-methylglutamine is present on Gln151.

It belongs to the universal ribosomal protein uL3 family. In terms of assembly, part of the 50S ribosomal subunit. Forms a cluster with proteins L14 and L19. Post-translationally, methylated by PrmB.

One of the primary rRNA binding proteins, it binds directly near the 3'-end of the 23S rRNA, where it nucleates assembly of the 50S subunit. The polypeptide is Large ribosomal subunit protein uL3 (Rhodospirillum centenum (strain ATCC 51521 / SW)).